A 69-amino-acid polypeptide reads, in one-letter code: DNA gyrase inhibitor YacG (69 aa).

Zn(2+) contacts are provided by Cys13, Cys16, Cys32, and Cys36.

Belongs to the DNA gyrase inhibitor YacG family. Interacts with GyrB. Zn(2+) is required as a cofactor.

Functionally, inhibits all the catalytic activities of DNA gyrase by preventing its interaction with DNA. Acts by binding directly to the C-terminal domain of GyrB, which probably disrupts DNA binding by the gyrase. In Neisseria meningitidis serogroup A / serotype 4A (strain DSM 15465 / Z2491), this protein is DNA gyrase inhibitor YacG.